We begin with the raw amino-acid sequence, 490 residues long: UDP-N-acetylmuramate--L-alanine ligase (490 aa).

Residue 126 to 132 (GTHGKTT) coordinates ATP.

The protein belongs to the MurCDEF family.

The protein localises to the cytoplasm. The enzyme catalyses UDP-N-acetyl-alpha-D-muramate + L-alanine + ATP = UDP-N-acetyl-alpha-D-muramoyl-L-alanine + ADP + phosphate + H(+). It functions in the pathway cell wall biogenesis; peptidoglycan biosynthesis. Cell wall formation. The protein is UDP-N-acetylmuramate--L-alanine ligase of Baumannia cicadellinicola subsp. Homalodisca coagulata.